The following is an 859-amino-acid chain: Leucine--tRNA ligase (859 aa).

A 'HIGH' region motif is present at residues 42–52 (PYPSGKLHVGH). Positions 611 to 615 (KMSKS) match the 'KMSKS' region motif. Lys-614 provides a ligand contact to ATP.

This sequence belongs to the class-I aminoacyl-tRNA synthetase family.

It localises to the cytoplasm. It catalyses the reaction tRNA(Leu) + L-leucine + ATP = L-leucyl-tRNA(Leu) + AMP + diphosphate. This is Leucine--tRNA ligase from Fusobacterium nucleatum subsp. nucleatum (strain ATCC 25586 / DSM 15643 / BCRC 10681 / CIP 101130 / JCM 8532 / KCTC 2640 / LMG 13131 / VPI 4355).